Here is a 107-residue protein sequence, read N- to C-terminus: Putative pterin-4-alpha-carbinolamine dehydratase (107 aa).

This sequence belongs to the pterin-4-alpha-carbinolamine dehydratase family.

The catalysed reaction is (4aS,6R)-4a-hydroxy-L-erythro-5,6,7,8-tetrahydrobiopterin = (6R)-L-erythro-6,7-dihydrobiopterin + H2O. The protein is Putative pterin-4-alpha-carbinolamine dehydratase of Paracoccus denitrificans (strain Pd 1222).